Consider the following 316-residue polypeptide: Neuroguidin-B (316 aa).

Disordered stretches follow at residues 124-169 (ENDP…SKVK) and 292-316 (VPFM…RRRH). Positions 145–156 (DERESDSGEEGA) are enriched in acidic residues. The segment covering 296 to 316 (KKSKKGPKKSKKKKGFSRRRH) has biased composition (basic residues).

The protein belongs to the SAS10 family. Part of the small subunit (SSU) processome, composed of more than 70 proteins and the RNA chaperone small nucleolar RNA (snoRNA) U3.

The protein resides in the nucleus. The protein localises to the nucleolus. Its subcellular location is the chromosome. It is found in the centromere. It localises to the cytoplasm. The protein resides in the cell projection. The protein localises to the axon. Its subcellular location is the dendrite. It is found in the filopodium. Functionally, part of the small subunit (SSU) processome, first precursor of the small eukaryotic ribosomal subunit. During the assembly of the SSU processome in the nucleolus, many ribosome biogenesis factors, an RNA chaperone and ribosomal proteins associate with the nascent pre-rRNA and work in concert to generate RNA folding, modifications, rearrangements and cleavage as well as targeted degradation of pre-ribosomal RNA by the RNA exosome. Its dissociation from the complex determines the transition from state pre-A1 to state pre-A1*. May inhibit mRNA translation. The chain is Neuroguidin-B (ngdn-b) from Xenopus laevis (African clawed frog).